Reading from the N-terminus, the 100-residue chain is Urease subunit gamma (100 aa).

The protein belongs to the urease gamma subunit family. In terms of assembly, heterotrimer of UreA (gamma), UreB (beta) and UreC (alpha) subunits. Three heterotrimers associate to form the active enzyme.

It localises to the cytoplasm. The enzyme catalyses urea + 2 H2O + H(+) = hydrogencarbonate + 2 NH4(+). It participates in nitrogen metabolism; urea degradation; CO(2) and NH(3) from urea (urease route): step 1/1. The polypeptide is Urease subunit gamma (Herpetosiphon aurantiacus (strain ATCC 23779 / DSM 785 / 114-95)).